A 397-amino-acid chain; its full sequence is MGASGLVWTLTIVLIAGLMLVDYVLHVRKTHVPTLRQAVIQSATFVGIAILFGIAVVVFGGSELAVEYFACYLTDEALSVDNLFVFLVIISSFGVPRLAQQKVLLFGIAFALVTRTGFIFVGAALIENFNSAFYLFGLVLLVMAGNLARPTGLESRDAETLKRSVIIRLADRFLRTSQDYNGDRLFTVSNNKRMMTPLLLVMIAVGGTDILFAFDSIPALFGLTQNVYLVFAATAFSLLGLRQLYFLIDSLLDRLVYLSYGLAVILGFIGVKLMLEALHDNKIPFINGGKPVPTVEVSTTQSLTVIIIVLLITTAASFWSARGRAQNAMARARRYATAYLDLHYETESAERDKIFTALLAAERQINTLPTKYRMQPGQDDDLMTLLCRAHAARDAHM.

The next 9 membrane-spanning stretches (helical) occupy residues 1–21 (MGAS…LMLV), 39–59 (VIQS…VVVF), 76–96 (EALS…FGVP), 103–123 (VLLF…FVGA), 124–144 (ALIE…LVMA), 194–214 (MMTP…LFAF), 219–239 (ALFG…FSLL), 255–275 (LVYL…KLML), and 301–321 (QSLT…FWSA).

The protein belongs to the TerC family.

Its subcellular location is the cell membrane. This is an uncharacterized protein from Mycobacterium tuberculosis (strain CDC 1551 / Oshkosh).